Consider the following 661-residue polypeptide: NUAK family SNF1-like kinase 1 (661 aa).

The residue at position 1 (Met1) is an N-acetylmethionine. The tract at residues 1–24 is disordered; the sequence is MEGAAAPVAGDRPDLGLGAPGSPR. Ser22 bears the Phosphoserine mark. Residues 55–306 form the Protein kinase domain; it reads YELQETLGKG…IEDIANHWWV (252 aa). ATP is bound by residues 61–69 and Lys84; that span reads LGKGTYGKV. Asp178 (proton acceptor) is an active-site residue. Thr211 is modified (phosphothreonine; by LKB1). Disordered regions lie at residues 345–421 and 442–570; these read TEAK…EGVV and LPSS…RPSS. Residues 393-404 are compositionally biased toward basic residues; that stretch reads SSKRPKGILKKR. Positions 399–402 match the GILK motif motif; that stretch reads GILK. A Phosphoserine modification is found at Ser455. Residues 518 to 529 are compositionally biased toward basic residues; it reads SCRRKGILKHSS. Phosphoserine; by PKB/AKT1 is present on Ser600.

It belongs to the protein kinase superfamily. CAMK Ser/Thr protein kinase family. SNF1 subfamily. As to quaternary structure, interacts (via GILK motif) with PPP1CB; the interaction is direct and bridges NUAK1 and PPP1R12A. Interacts with CDKN1A. Mg(2+) serves as cofactor. Ubiquitinated with 'Lys-29'- and 'Lys-33'-linked polyubiquitins which appear to impede LKB1-mediated phosphorylation. Deubiquitinated by USP9X. In terms of processing, phosphorylated at Thr-211 by STK11/LKB1 in complex with STE20-related adapter-alpha (STRADA) pseudo kinase and CAB39. Not dephosphorylated by the myosin PP1 complex when regulating its activity, due to the presence of PPP1R12A, which prevents myosin PP1 from dephosphorylating NUAK1. Phosphorylated by STK38L upon stimulation with IGF1. As to expression, expressed at high levels in heart and brain, and at lower levels in skeletal muscle, kidney, ovary, placenta, lung and liver. Highly up-regulated in colorectal cancer cell lines.

The protein resides in the nucleus. The protein localises to the cytoplasm. It catalyses the reaction L-seryl-[protein] + ATP = O-phospho-L-seryl-[protein] + ADP + H(+). It carries out the reaction L-threonyl-[protein] + ATP = O-phospho-L-threonyl-[protein] + ADP + H(+). Activated by phosphorylation on Thr-211. Activated by phosphorylation at Ser-600 AKT1 during glucose starvation; the relevance of such activation in normal cells is however unsure. Serine/threonine-protein kinase involved in various processes such as cell adhesion, regulation of cell ploidy and senescence, cell proliferation and tumor progression. Phosphorylates ATM, CASP6, LATS1, PPP1R12A and p53/TP53. Acts as a regulator of cellular senescence and cellular ploidy by mediating phosphorylation of 'Ser-464' of LATS1, thereby controlling its stability. Controls cell adhesion by regulating activity of the myosin protein phosphatase 1 (PP1) complex. Acts by mediating phosphorylation of PPP1R12A subunit of myosin PP1: phosphorylated PPP1R12A then interacts with 14-3-3, leading to reduced dephosphorylation of myosin MLC2 by myosin PP1. May be involved in DNA damage response: phosphorylates p53/TP53 at 'Ser-15' and 'Ser-392' and is recruited to the CDKN1A/WAF1 promoter to participate in transcription activation by p53/TP53. May also act as a tumor malignancy-associated factor by promoting tumor invasion and metastasis under regulation and phosphorylation by AKT1. Suppresses Fas-induced apoptosis by mediating phosphorylation of CASP6, thereby suppressing the activation of the caspase and the subsequent cleavage of CFLAR. Regulates UV radiation-induced DNA damage response mediated by CDKN1A. In association with STK11, phosphorylates CDKN1A in response to UV radiation and contributes to its degradation which is necessary for optimal DNA repair. The polypeptide is NUAK family SNF1-like kinase 1 (NUAK1) (Homo sapiens (Human)).